The following is a 222-amino-acid chain: Large ribosomal subunit protein bL25 (222 aa).

The protein belongs to the bacterial ribosomal protein bL25 family. CTC subfamily. In terms of assembly, part of the 50S ribosomal subunit; part of the 5S rRNA/L5/L18/L25 subcomplex. Contacts the 5S rRNA. Binds to the 5S rRNA independently of L5 and L18.

In terms of biological role, this is one of the proteins that binds to the 5S RNA in the ribosome where it forms part of the central protuberance. The sequence is that of Large ribosomal subunit protein bL25 from Ruthia magnifica subsp. Calyptogena magnifica.